The chain runs to 484 residues: MGKNKKKTGKKAKSHPHVEDVDETVNKPEEIINSVNVTVPPKMSTDPEADGIVASPDDEGKDLSEGVDKQKVNDGLTVDTINPLEDKKAGDEMKELREEIERLKLELSHKKDQETPNEDFKNELANVIKERDEFKTQYDTLLSKISSMKSIFNKMKEAQKQLEEVQEQLTEYESQNLKLKKKLEATKTENSELQSTIVTLNTELENLEKEQESTEEVFLEYESRIEALEDEKHDIIEKHSKELNTYRKEKDQLNLQVQELMIILENNKQDISDLRTERDELRQALESHEKEKAVLKNSLNDLELKIEEVDNKREEEARERDQEVKSLRSQLDTEIETHNNDTEALESMKKQLEAMKEDASMKEKYEEESKQHILQIGKLRHEAIILNEHLTKALAMLKKSSDSESVDKELISNLLISFVSIPRADPRKFEVLELLSNFLNWDEDKKQQAGLISNNESKNSSAVSRTESFVSLWTNYLEKESEKD.

A compositionally biased stretch (basic residues) spans 1 to 15 (MGKNKKKTGKKAKSH). Residues 1 to 75 (MGKNKKKTGK…GVDKQKVNDG (75 aa)) are disordered. The segment covering 16–30 (PHVEDVDETVNKPEE) has biased composition (basic and acidic residues). Serine 55 and serine 64 each carry phosphoserine. The segment covering 61 to 72 (KDLSEGVDKQKV) has biased composition (basic and acidic residues). A coiled-coil region spans residues 84–383 (LEDKKAGDEM…LQIGKLRHEA (300 aa)). The 52-residue stretch at 401–452 (SDSESVDKELISNLLISFVSIPRADPRKFEVLELLSNFLNWDEDKKQQAGLI) folds into the GRIP domain. Residue serine 468 is modified to Phosphoserine.

It is found in the golgi apparatus lumen. Functionally, involved in the structural organization of the cis-Golgi and in vesicle targeting/fusion stages of ER to Golgi transport. In Saccharomyces cerevisiae (strain ATCC 204508 / S288c) (Baker's yeast), this protein is GRIP domain-containing protein RUD3 (RUD3).